A 160-amino-acid polypeptide reads, in one-letter code: Major strawberry allergen Fra a 1.05 (160 aa).

The protein belongs to the BetVI family. Post-translationally, phosphorylated in vivo. Phosphorylation prevents its activity as ribonuclease.

In terms of biological role, possesses ribonuclease activity in vitro. This is Major strawberry allergen Fra a 1.05 from Fragaria ananassa (Strawberry).